Reading from the N-terminus, the 470-residue chain is Uronate isomerase (470 aa).

The protein belongs to the metallo-dependent hydrolases superfamily. Uronate isomerase family.

The enzyme catalyses D-glucuronate = D-fructuronate. It carries out the reaction aldehydo-D-galacturonate = keto-D-tagaturonate. The protein operates within carbohydrate metabolism; pentose and glucuronate interconversion. This is Uronate isomerase from Vibrio vulnificus (strain YJ016).